Consider the following 294-residue polypeptide: Survival motor neuron protein (294 aa).

The segment covering 1–12 has biased composition (gly residues); that stretch reads MAMSSGGSGGGV. Residues 1 to 32 form a disordered region; sequence MAMSSGGSGGGVPEQEDSVLFRRGTGQSDDSD. The residue at position 2 (A2) is an N-acetylalanine. 3 positions are modified to phosphoserine; by PKA: S4, S5, and S8. The segment at 13 to 44 is P1 (binding site for GEMIN2); it reads PEQEDSVLFRRGTGQSDDSDIWDDTALIKAYD. T25 carries the phosphothreonine modification. Residues S28 and S31 each carry the phosphoserine modification. Residue K51 forms a Glycyl lysine isopeptide (Lys-Gly) (interchain with G-Cter in SUMO2) linkage. The tract at residues 58-88 is disordered; it reads DICETSGKPKTTPKRKPAKKNKSQKKNTAAP. A compositionally biased stretch (basic residues) spans 68 to 82; the sequence is TTPKRKPAKKNKSQK. At T69 the chain carries Phosphothreonine. Phosphothreonine; by PKA is present on T85. The 61-residue stretch at 91–151 folds into the Tudor domain; the sequence is QWKVGDKCSA…LSPISEVANN (61 aa). The tract at residues 97–209 is required for interaction with RPP20/POP7; the sequence is KCSAIWSEDG…MPGPRLGPGK (113 aa). Positions 156–166 are enriched in low complexity; it reads AQENENESQVS. Residues 156–222 are disordered; sequence AQENENESQV…KFNGPPPPPP (67 aa). Residue S187 is modified to Phosphoserine; by PKA. Over residues 194–204 the composition is skewed to pro residues; it reads LPPPPPMPGPR. K209 participates in a covalent cross-link: Glycyl lysine isopeptide (Lys-Gly) (interchain with G-Cter in SUMO2). The P2 (binding site for SM B) stretch occupies residues 240-267; it reads PPIIPPPPPICPDSLDDADALGSMLISW. The tract at residues 279–294 is required for interaction with SYNCRIP; the sequence is GFRQNQKEGRCSHSLN.

The protein belongs to the SMN family. As to quaternary structure, homooligomer; may form higher order homooligomers in the dimer to octamer range. Part of the core SMN complex that contains SMN1, GEMIN2/SIP1, DDX20/GEMIN3, GEMIN4, GEMIN5, GEMIN6, GEMIN7, GEMIN8 and STRAP/UNRIP. Part of the SMN-Sm complex that contains SMN1, GEMIN2/SIP1, DDX20/GEMIN3, GEMIN4, GEMIN5, GEMIN6, GEMIN7, GEMIN8, STRAP/UNRIP and the Sm proteins SNRPB, SNRPD1, SNRPD2, SNRPD3, SNRPE, SNRPF and SNRPG. Component of an import snRNP complex composed of KPNB1, RNUT1, SMN1 and ZNF259. Interacts with DDX20, FBL, NOLA1, RNUT1, SYNCRIP and with several spliceosomal snRNP core Sm proteins, including SNRPB, SNRPD1, SNRPD2, SNRPD3, SNRPE and ILF3. Interacts with GEMIN2; the interaction is direct. Interacts with GEMIN3; the interaction is direct. Interacts with GEMIN8; the interaction is direct. Interacts with SNRPB; the interaction is direct. Interacts (via Tudor domain) with SNRPD1 (via C-terminus); the interaction is direct. Interacts with SNRPD2; the interaction is direct. Interacts (via Tudor domain) with SNRPD3 (via C-terminus); the interaction is direct. Interacts with SNRPE; the interaction is direct. Interacts with OSTF1, LSM10, LSM11 and RPP20/POP7. Interacts (via C-terminal region) with ZPR1 (via C-terminal region). Interacts (via Tudor domain) with COIL. Interacts with SETX; recruits SETX to POLR2A. Interacts with POLR2A (via the C-terminal domain (CTD)). Interacts with PRMT5. Interacts with XRN2. Interacts (via C-terminus) with FMR1 (via C-terminus); the interaction is direct and occurs in a RNA-independent manner. Interacts (via Tudor domain) with SF3B2 ('Arg-508'-methylated form). Interacts with WRAP53/TCAB1. Interacts (via Tudor domain) with ELAVL4 in an RNA-independent manner; the interaction is required for localization of ELAVL4 to RNA granules. Interacts with FRG1.

It is found in the nucleus. The protein localises to the gem. Its subcellular location is the cajal body. It localises to the cytoplasm. The protein resides in the cytoplasmic granule. It is found in the perikaryon. The protein localises to the cell projection. Its subcellular location is the neuron projection. It localises to the axon. The protein resides in the myofibril. It is found in the sarcomere. The protein localises to the z line. In terms of biological role, the SMN complex catalyzes the assembly of small nuclear ribonucleoproteins (snRNPs), the building blocks of the spliceosome, and thereby plays an important role in the splicing of cellular pre-mRNAs. Most spliceosomal snRNPs contain a common set of Sm proteins SNRPB, SNRPD1, SNRPD2, SNRPD3, SNRPE, SNRPF and SNRPG that assemble in a heptameric protein ring on the Sm site of the small nuclear RNA to form the core snRNP (Sm core). In the cytosol, the Sm proteins SNRPD1, SNRPD2, SNRPE, SNRPF and SNRPG are trapped in an inactive 6S pICln-Sm complex by the chaperone CLNS1A that controls the assembly of the core snRNP. To assemble core snRNPs, the SMN complex accepts the trapped 5Sm proteins from CLNS1A forming an intermediate. Binding of snRNA inside 5Sm ultimately triggers eviction of the SMN complex, thereby allowing binding of SNRPD3 and SNRPB to complete assembly of the core snRNP. Within the SMN complex, SMN1 acts as a structural backbone and together with GEMIN2 it gathers the Sm complex subunits. Ensures the correct splicing of U12 intron-containing genes that may be important for normal motor and proprioceptive neurons development. Also required for resolving RNA-DNA hybrids created by RNA polymerase II, that form R-loop in transcription terminal regions, an important step in proper transcription termination. May also play a role in the metabolism of small nucleolar ribonucleoprotein (snoRNPs). The polypeptide is Survival motor neuron protein (SMN1) (Macaca fascicularis (Crab-eating macaque)).